A 164-amino-acid chain; its full sequence is SsrA-binding protein (164 aa).

The segment at 141-164 (KLHDKRQDEKQKSIKKEINSALKR) is disordered. Positions 145–158 (KRQDEKQKSIKKEI) are enriched in basic and acidic residues.

This sequence belongs to the SmpB family.

It localises to the cytoplasm. Required for rescue of stalled ribosomes mediated by trans-translation. Binds to transfer-messenger RNA (tmRNA), required for stable association of tmRNA with ribosomes. tmRNA and SmpB together mimic tRNA shape, replacing the anticodon stem-loop with SmpB. tmRNA is encoded by the ssrA gene; the 2 termini fold to resemble tRNA(Ala) and it encodes a 'tag peptide', a short internal open reading frame. During trans-translation Ala-aminoacylated tmRNA acts like a tRNA, entering the A-site of stalled ribosomes, displacing the stalled mRNA. The ribosome then switches to translate the ORF on the tmRNA; the nascent peptide is terminated with the 'tag peptide' encoded by the tmRNA and targeted for degradation. The ribosome is freed to recommence translation, which seems to be the essential function of trans-translation. The polypeptide is SsrA-binding protein (Prochlorococcus marinus (strain MIT 9301)).